A 605-amino-acid polypeptide reads, in one-letter code: Probable potassium transport system protein Kup (605 aa).

The next 12 membrane-spanning stretches (helical) occupy residues 18 to 38, 46 to 66, 97 to 117, 138 to 158, 169 to 189, 204 to 224, 247 to 267, 287 to 307, 339 to 359, 368 to 388, 395 to 415, and 418 to 438; these read GLVF…IIAL, ILGI…LEYA, MAFV…DGVI, GLSQ…LFVF, AFGP…AISV, AISF…EVIL, AWYF…AFII, FYIP…QALI, IYIG…MLVF, AYGF…TMIF, WKVP…VSNC, and LPHG…VILI.

This sequence belongs to the HAK/KUP transporter (TC 2.A.72) family.

It localises to the cell inner membrane. The enzyme catalyses K(+)(in) + H(+)(in) = K(+)(out) + H(+)(out). Transport of potassium into the cell. Likely operates as a K(+):H(+) symporter. The polypeptide is Probable potassium transport system protein Kup (Pelobacter propionicus (strain DSM 2379 / NBRC 103807 / OttBd1)).